A 720-amino-acid chain; its full sequence is Pollen receptor-like kinase 1 (720 aa).

The stretch at 40-64 is one LRR 1; degenerate repeat; the sequence is LCSRGHLLIIFLLLVSPFNDAAVDV. The LRR 2; degenerate repeat unit spans residues 123–146; the sequence is LGVLCYEGDVWGLQLENLDLSGVI. 3 LRR repeats span residues 154–179, 226–248, and 249–273; these read LHFL…SLEP, LPQV…HFPP, and NVLK…SLMD. Residues 288 to 319 form a disordered region; it reads LESACNSPSQEANNPDSRNSSTISGQSSTDVI. Residues 291–317 are compositionally biased toward polar residues; sequence ACNSPSQEANNPDSRNSSTISGQSSTD. The helical transmembrane segment at 330 to 350 threads the bilayer; that stretch reads MLIVAVCLVVLCLLIVLILII. Composition is skewed to polar residues over residues 356–382 and 389–405; these read SSSQ…TSSA and LSGN…NSNK. The interval 356 to 409 is disordered; it reads SSSQNPQPVESNYSNNDRDQNAFTSSAPDDHVTLSGNSTYSNNQHSNSNKAEAP. One can recognise a Protein kinase domain in the interval 434-702; sequence RASAEVLGSG…KEVVQSIQSL (269 aa). Residues 440–448 and Lys462 each bind ATP; that span reads LGSGNLGSS.

This sequence belongs to the protein kinase superfamily. In terms of assembly, interacts with KIP1. Autophosphorylated. Expressed in mature pollen grains and pollen tubes, but not in style, petal, leaf, root or sepal. Very low expression in the ovary.

It is found in the microsome membrane. The protein localises to the cytoplasm. It carries out the reaction L-seryl-[protein] + ATP = O-phospho-L-seryl-[protein] + ADP + H(+). The enzyme catalyses L-threonyl-[protein] + ATP = O-phospho-L-threonyl-[protein] + ADP + H(+). It catalyses the reaction L-tyrosyl-[protein] + ATP = O-phospho-L-tyrosyl-[protein] + ADP + H(+). In terms of biological role, dual-specificity kinase with both serine/threonine and tyrosine kinase activities. Required for postmeiotic development of microspores. Involved in embryo sac development at the late stages of megagametogenesis. Involved in the phosphorylation of KIP1. The sequence is that of Pollen receptor-like kinase 1 from Petunia integrifolia (Violet-flowered petunia).